The chain runs to 75 residues: MSIGLAVGLIVGLSILFFIIGGVVAFFVTRRLFQKQLKENPPINEKMIRAMFLQMGVKASESRIRQVMRSMQQAK.

Residues 8 to 28 traverse the membrane as a helical segment; sequence GLIVGLSILFFIIGGVVAFFV.

This sequence belongs to the UPF0154 family.

It localises to the membrane. The protein is UPF0154 protein MYPU_1460 of Mycoplasmopsis pulmonis (strain UAB CTIP) (Mycoplasma pulmonis).